The primary structure comprises 187 residues: Ribulose bisphosphate carboxylase small subunit, chloroplastic (187 aa).

The N-terminal 56 residues, 1-56 (MASSVMSTATVATGANAAQASMIASFNGLKSAASFPVTRKQDLDITSIASNGGRVE), are a transit peptide targeting the chloroplast.

The protein belongs to the RuBisCO small chain family. Heterohexadecamer of 8 large and 8 small subunits.

It is found in the plastid. It localises to the chloroplast. In terms of biological role, ruBisCO catalyzes two reactions: the carboxylation of D-ribulose 1,5-bisphosphate, the primary event in carbon dioxide fixation, as well as the oxidative fragmentation of the pentose substrate. Both reactions occur simultaneously and in competition at the same active site. Although the small subunit is not catalytic it is essential for maximal activity. The polypeptide is Ribulose bisphosphate carboxylase small subunit, chloroplastic (Capsicum annuum (Capsicum pepper)).